Consider the following 355-residue polypeptide: Glucose-6-phosphatase 2 (355 aa).

The Lumenal portion of the chain corresponds to 1 to 24 (MDFLHRNGVLIIQHLQKDYRAYYT). The chain crosses the membrane as a helical span at residues 25 to 45 (FLNFMSNVGDPRNIFFIYFPL). Residues 46–56 (CFQFNQTVGTK) are Cytoplasmic-facing. The helical transmembrane segment at 57–77 (MIWVAVIGDWLNLIFKWILFG) threads the bilayer. Topologically, residues 78–115 (HRPYWWVQETQIYPNHSSPCLEQFPTTCETGPGSPSGH) are lumenal. A substrate-binding site is contributed by Arg79. N-linked (GlcNAc...) asparagine glycosylation occurs at Asn92. His115 functions as the Proton donor in the catalytic mechanism. Residues 116 to 136 (AMGASCVWYVMVTAALSHTVC) traverse the membrane as a helical segment. Over 137-146 (GMDKFSITLH) the chain is Cytoplasmic. Residues 147–167 (RLTWSFLWSVFWLIQISVCIS) form a helical membrane-spanning segment. Position 168 (Arg168) is a topological domain, lumenal. A substrate-binding site is contributed by Arg168. The helical transmembrane segment at 169 to 189 (VFIATHFPHQVILGVIGGMLV) threads the bilayer. His174 acts as the Nucleophile in catalysis. The Cytoplasmic portion of the chain corresponds to 190-211 (AEAFEHTPGIQTASLGTYLKTN). Residues 212–232 (LFLFLFAVGFYLLLRVLNIDL) form a helical membrane-spanning segment. Topologically, residues 233–261 (LWSVPIAKKWCANPDWIHIDTTPFAGLVR) are lumenal. The chain crosses the membrane as a helical span at residues 262–282 (NLGVLFGLGFAINSEMFLLSC). The Cytoplasmic portion of the chain corresponds to 283–293 (RGGNNYTLSFR). A helical transmembrane segment spans residues 294-314 (LLCALTSLTILQLYHFLQIPT). Residues 315-318 (HEEH) lie on the Lumenal side of the membrane. A helical transmembrane segment spans residues 319-339 (LFYVLSFCKSASIPLTVVAFI). The Cytoplasmic segment spans residues 340–355 (PYSVHMLMKQSGKKSQ). Residues 352-355 (KKSQ) carry the Prevents secretion from ER motif.

The protein belongs to the glucose-6-phosphatase family. Post-translationally, N-glycosylated; the non-glycosylated form is more unstable and is degraded through the proteasome. As to expression, specifically expressed in pancreas and also detected to a lower extent in testis. Expressed by most islet cells in the pancreas (at protein level).

Its subcellular location is the endoplasmic reticulum membrane. It carries out the reaction D-glucose 6-phosphate + H2O = D-glucose + phosphate. The protein operates within carbohydrate biosynthesis; gluconeogenesis. Functionally, may hydrolyze glucose-6-phosphate to glucose in the endoplasmic reticulum. May be responsible for glucose production through glycogenolysis and gluconeogenesis. This Homo sapiens (Human) protein is Glucose-6-phosphatase 2 (G6PC2).